The sequence spans 441 residues: G-protein coupled receptor family C group 5 member C (441 aa).

An N-terminal signal peptide occupies residues 1-22 (MATHKTLLMCLGLPLFFPGALA). Residues 23–49 (QNHAPPGCSPDLDPLYYNLCDRSGAWG) lie on the Extracellular side of the membrane. A helical membrane pass occupies residues 50–70 (IVLEAVAGAGIITTFVLTIIL). Residues 71–84 (VASLPFVQDTKKRS) are Cytoplasmic-facing. Residues 85–105 (LLGTQVFFLLGTLGLFCLVFA) traverse the membrane as a helical segment. The Extracellular segment spans residues 106 to 119 (CVVKPDFSTCASRR). A helical transmembrane segment spans residues 120 to 140 (FLFGVLFAICFSCLIAHTLSL). At 141–154 (NFLARKNHGPRGWV) the chain is on the cytoplasmic side. Residues 155–175 (IFTVALLLTLVEVIINTEWLI) traverse the membrane as a helical segment. At 176 to 207 (ITLVRGGGQVSTPGNGSADWTVTSPCAIANMD) the chain is on the extracellular side. N-linked (GlcNAc...) asparagine glycosylation occurs at N190. Residues 208-228 (FVMALIYVMLLLLAAFLGAWP) traverse the membrane as a helical segment. Residues 229 to 240 (TLCGRFKRWRKH) are Cytoplasmic-facing. The helical transmembrane segment at 241-261 (GVFVLLTTATSIAIWVVWIVM) threads the bilayer. Residues 262–278 (YTYGNKQHHSPTWDDPT) lie on the Extracellular side of the membrane. The helical transmembrane segment at 279–299 (LAIALAANAWTFVFFYVIPEV) threads the bilayer. At 300–441 (SQVTKPSPEQ…DQSPKNKTRW (142 aa)) the chain is on the cytoplasmic side. 4 positions are modified to phosphoserine: S343, S382, S402, and S405. Y413 bears the Phosphotyrosine mark. The tract at residues 419 to 441 (QVATPTKDGKISQDQSPKNKTRW) is disordered. The residue at position 422 (T422) is a Phosphothreonine. Over residues 430-441 (SQDQSPKNKTRW) the composition is skewed to polar residues. S434 is subject to Phosphoserine.

Belongs to the G-protein coupled receptor 3 family.

It is found in the cell membrane. Its function is as follows. This retinoic acid-inducible G-protein coupled receptor provide evidence for a possible interaction between retinoid and G-protein signaling pathways. In Rattus norvegicus (Rat), this protein is G-protein coupled receptor family C group 5 member C (Gprc5c).